The primary structure comprises 369 residues: Probable methyltransferase TCM_000331 (369 aa).

S-adenosyl-L-homocysteine contacts are provided by Y18, C60, N65, D98, L99, S137, and F138. Residues N176, D261, F263, and N264 each contribute to the Mg(2+) site.

Belongs to the methyltransferase superfamily. Type-7 methyltransferase family. Mg(2+) is required as a cofactor.

The protein is Probable methyltransferase TCM_000331 of Theobroma cacao (Cacao).